The sequence spans 75 residues: CLAVATA3/ESR (CLE)-related protein 2 (75 aa).

Positions 1 to 22 (MAKLSFTFCFLLFLLLSSIAAG) are cleaved as a signal peptide. The segment at 40–75 (PSIEATSPTVEDDQAAGSHGKSPERLSPGGPDPQHH) is disordered. A hydroxyproline mark is found at Pro67 and Pro70. Pro70 carries an O-linked (Ara...) hydroxyproline glycan.

It belongs to the CLV3/ESR signal peptide family. Interacts with the extracellular leucine-rich repeat region of CLV1. In terms of processing, the O-glycosylation (arabinosylation) of the hydroxyproline Pro-70 enhances binding affinity of the CLE2p peptide for its receptor. As to expression, mostly expressed in roots and seedlings, and, to a lower extent, in apex.

The protein localises to the secreted. It is found in the extracellular space. In terms of biological role, extracellular signal peptide that regulates cell fate. May act with CLV1 as a ligand-receptor pair in a signal transduction pathway, coordinating growth between adjacent meristematic regions. The polypeptide is CLAVATA3/ESR (CLE)-related protein 2 (Arabidopsis thaliana (Mouse-ear cress)).